A 22-amino-acid polypeptide reads, in one-letter code: thr operon leader peptide (22 aa).

The protein belongs to the thr operon leader peptide family.

In terms of biological role, this protein is involved in control of the biosynthesis of threonine. The polypeptide is thr operon leader peptide (Klebsiella pneumoniae (strain 342)).